The primary structure comprises 849 residues: Rho guanine nucleotide exchange factor 15 (849 aa).

3 disordered regions span residues 1–146, 159–202, and 277–308; these read MSAQ…ASAP, GAEG…NGTP, and LPPLKPPKPTKVRQDISTSEELPQPDLKLPSE. The span at 18-31 shows a compositional bias: basic residues; it reads RIIRPRPPSRHRAP. Residues 48 to 59 are compositionally biased toward polar residues; the sequence is QISNDASASVCT. Residues 65–110 are compositionally biased toward low complexity; it reads PPTASLKPPALLPPSVSRTSLDSQTSPDSPSSTPSPSPVSRRSISP. A phosphoserine mark is found at S107 and S109. A compositionally biased stretch (pro residues) spans 111 to 123; sequence EPAPCSPVPPPKP. Over residues 164 to 180 the composition is skewed to polar residues; sequence AQSSDSLERCSQGSTEV. The residue at position 361 (Y361) is a Phosphotyrosine; by EPHB2. The region spanning 425–609 is the DH domain; that stretch reads RMQESLFEVV…SKIIERCSAE (185 aa). Composition is skewed to polar residues over residues 771–786 and 840–849; these read CSEPSTPSKTEGQSLE and SSGTPDTPQP. Disordered stretches follow at residues 771–803 and 819–849; these read CSEPSTPSKTEGQSLESKAPRKHLHKNPEGWLK and GEHERRKHLRQHQKLLEAVGPSSGTPDTPQP.

As to quaternary structure, interacts with EPHA4. Interacts with EPHB2. Phosphorylated on tyrosine residues upon EFNA1 stimulation. EPHB2-dependent phosphorylation at Tyr-361 triggers UBE3A-mediated ubiquitination. In terms of processing, ubiquitinated; UBE3A-mediated ubiquitination and degradation by the proteasome promotes EFNB1-dependent synapse formation. At P12, expressed is detected in the CA1 region and the dentate gyrus of the hippocampus.

The protein localises to the cell projection. The protein resides in the dendrite. Functionally, specific GEF for RhoA activation. Does not activate RAC1 or CDC42. Regulates vascular smooth muscle contractility. Negatively regulates excitatory synapse development by suppressing the synapse-promoting activity of EPHB2. The chain is Rho guanine nucleotide exchange factor 15 (Arhgef15) from Mus musculus (Mouse).